A 523-amino-acid polypeptide reads, in one-letter code: MAPPRPEETISEDLDESSGSSETEQPDIQTRAPKRRRLSASSDDSYVAPAPLPTLSRIKKKGAEDAKPVASAGQENPVLIRDALEIGLREEASSFSALNVAPWLVGSLTTLAVRKPTAIQKACIPEILNGKDCIGGSRTGSGKTIAFSVPMLQKWAEDPLGIFGLILTPTRELALQIFEQIKAISAPQSMKPVLITGGTDMRSQALALAGRPHVVVATPGRLADHIKSSGEDTVCGLKRVRMVVLDEADRLLSSGPGSMLPDVETCLSALPPSSERQTLLFTATVTPEVRALKNMPRAANKPPVFVTEISSESQGTVPPTLKQTYLKVPLTHREAFLHVLLSTEGNSTKPAIIFCNHTKTADLLERMLRRLSHRVTSLHSLLPQSERNANLARFRASAARILVATDVASRGLDIPSVSLVVNYDVPRNPDDYVHRVGRTARAGRSGESVTLVGQRDVQLVLAIEARVGRQMEEWSEEGVSIEGRVVRTGVLKEVGEAKREASGEIDEGRDVLGRKRNKLKKVR.

A disordered region spans residues 1 to 52 (MAPPRPEETISEDLDESSGSSETEQPDIQTRAPKRRRLSASSDDSYVAPAPL). Residues 93–121 (SSFSALNVAPWLVGSLTTLAVRKPTAIQK) carry the Q motif motif. Residues 124–303 (IPEILNGKDC…NMPRAANKPP (180 aa)) enclose the Helicase ATP-binding domain. An ATP-binding site is contributed by 137–144 (SRTGSGKT). The DEAD box signature appears at 246-249 (DEAD). The Helicase C-terminal domain occupies 335–492 (AFLHVLLSTE…GRVVRTGVLK (158 aa)).

It belongs to the DEAD box helicase family. DDX49/DBP8 subfamily.

The protein localises to the nucleus. The protein resides in the nucleolus. It carries out the reaction ATP + H2O = ADP + phosphate + H(+). In terms of biological role, ATP-binding RNA helicase involved in 40S ribosomal subunit biogenesis and is required for the normal formation of 18S rRNAs through pre-rRNA processing at A0, A1 and A2 sites. Required for vegetative growth. The sequence is that of ATP-dependent RNA helicase dbp8 (dbp8) from Aspergillus clavatus (strain ATCC 1007 / CBS 513.65 / DSM 816 / NCTC 3887 / NRRL 1 / QM 1276 / 107).